The following is a 287-amino-acid chain: Large ribosomal subunit protein uL2 (287 aa).

The interval Arg-221 to Ser-287 is disordered. Residues Leu-271–Ser-287 are compositionally biased toward basic residues.

Belongs to the universal ribosomal protein uL2 family. In terms of assembly, part of the 50S ribosomal subunit. Forms a bridge to the 30S subunit in the 70S ribosome.

In terms of biological role, one of the primary rRNA binding proteins. Required for association of the 30S and 50S subunits to form the 70S ribosome, for tRNA binding and peptide bond formation. It has been suggested to have peptidyltransferase activity; this is somewhat controversial. Makes several contacts with the 16S rRNA in the 70S ribosome. The polypeptide is Large ribosomal subunit protein uL2 (Synechococcus sp. (strain CC9605)).